Reading from the N-terminus, the 251-residue chain is Triosephosphate isomerase (251 aa).

Substrate is bound at residue 9–11 (NWK). The active-site Electrophile is the His95. Glu167 (proton acceptor) is an active-site residue. Residues Gly173, Ser213, and 234–235 (GG) each bind substrate.

This sequence belongs to the triosephosphate isomerase family. In terms of assembly, homodimer.

Its subcellular location is the cytoplasm. The enzyme catalyses D-glyceraldehyde 3-phosphate = dihydroxyacetone phosphate. Its pathway is carbohydrate biosynthesis; gluconeogenesis. It functions in the pathway carbohydrate degradation; glycolysis; D-glyceraldehyde 3-phosphate from glycerone phosphate: step 1/1. In terms of biological role, involved in the gluconeogenesis. Catalyzes stereospecifically the conversion of dihydroxyacetone phosphate (DHAP) to D-glyceraldehyde-3-phosphate (G3P). The polypeptide is Triosephosphate isomerase (Lacticaseibacillus casei (strain BL23) (Lactobacillus casei)).